Reading from the N-terminus, the 421-residue chain is Glutamate dehydrogenase (421 aa).

The active site involves K105. Residue 220–226 (GYGNAGY) participates in NAD(+) binding.

It belongs to the Glu/Leu/Phe/Val dehydrogenases family. As to quaternary structure, homohexamer.

The protein localises to the cytoplasm. It is found in the chromosome. It catalyses the reaction L-glutamate + NAD(+) + H2O = 2-oxoglutarate + NH4(+) + NADH + H(+). It carries out the reaction L-glutamate + NADP(+) + H2O = 2-oxoglutarate + NH4(+) + NADPH + H(+). In Thermococcus kodakarensis (strain ATCC BAA-918 / JCM 12380 / KOD1) (Pyrococcus kodakaraensis (strain KOD1)), this protein is Glutamate dehydrogenase (gdhA).